Reading from the N-terminus, the 185-residue chain is Elongation factor P (185 aa).

This sequence belongs to the elongation factor P family.

Its subcellular location is the cytoplasm. It functions in the pathway protein biosynthesis; polypeptide chain elongation. Involved in peptide bond synthesis. Stimulates efficient translation and peptide-bond synthesis on native or reconstituted 70S ribosomes in vitro. Probably functions indirectly by altering the affinity of the ribosome for aminoacyl-tRNA, thus increasing their reactivity as acceptors for peptidyl transferase. This chain is Elongation factor P, found in Halalkalibacterium halodurans (strain ATCC BAA-125 / DSM 18197 / FERM 7344 / JCM 9153 / C-125) (Bacillus halodurans).